A 304-amino-acid chain; its full sequence is uncharacterized protein (304 aa).

The next 10 helical transmembrane spans lie at 5–25, 42–62, 68–88, 96–116, 120–140, 150–170, 178–198, 215–235, 245–265, and 268–288; these read TIIL…FIAI, FLLA…PLLF, IFQL…ILYG, IASV…FIFF, LYFF…IILF, TIKG…IYLY, ISIL…FLVI, ILAT…SYFY, ASTI…FVWG, and IGID…ITIF. 2 consecutive EamA domains span residues 16 to 140 and 162 to 288; these read ITWG…IILF and TSHA…ITIF.

This sequence belongs to the EamA transporter family.

The protein resides in the cell membrane. This is an uncharacterized protein from Buchnera aphidicola subsp. Schlechtendalia chinensis.